The primary structure comprises 329 residues: Proline/serine-rich coiled-coil protein 1 (329 aa).

Ser-22 carries the phosphoserine modification. Copy 1 of the repeat occupies 38 to 41 (PEKP). Phosphoserine is present on residues Ser-47, Ser-65, and Ser-70. 2 tandem repeats follow at residues 68 to 71 (PLSP) and 103 to 106 (PGRP). The segment at 68–215 (PLSPEKLEEI…ARTVASPPIP (148 aa)) is 5 X 4 AA repeats of P-X-X-P. A coiled-coil region spans residues 70 to 94 (SPEKLEEILDEANRLAAQLEECALK). Residues 94-329 (KDSENAAAGP…RKAAVPGPTR (236 aa)) form a disordered region. Residues 114-126 (PRRETFVLKDSPV) show a composition bias toward basic and acidic residues. Ser-124 carries the phosphoserine modification. 2 stretches are compositionally biased toward polar residues: residues 132 to 148 (TVSS…TGLR) and 175 to 186 (PTCNLFSASKNP). The residue at position 145 (Thr-145) is a Phosphothreonine. Ser-189 is modified (phosphoserine). Tandem repeats lie at residues 194 to 197 (PTLP) and 212 to 215 (PPIP). Low complexity-rich tracts occupy residues 219-231 (APQS…QCSS) and 302-315 (GAAR…ARGR).

The protein belongs to the PSRC1 family. As to quaternary structure, interacts with APC2. Interacts with KIF2A. Interacts with ANKRD53; recruits ANKRD53 to the spindle during mitosis. Phosphorylated during mitosis.

The protein localises to the cytoplasm. It is found in the cytoskeleton. It localises to the spindle. The protein resides in the spindle pole. In terms of biological role, required for normal progression through mitosis. Required for normal congress of chromosomes at the metaphase plate, and for normal rate of chromosomal segregation during anaphase. Plays a role in the regulation of mitotic spindle dynamics. Increases the rate of turnover of microtubules on metaphase spindles, and contributes to the generation of normal tension across sister kinetochores. Recruits KIF2A and ANKRD53 to the mitotic spindle and spindle poles. May participate in p53/TP53-regulated growth suppression. This Rattus norvegicus (Rat) protein is Proline/serine-rich coiled-coil protein 1 (Psrc1).